A 331-amino-acid polypeptide reads, in one-letter code: UPF0194 membrane protein YbhG (331 aa).

An N-terminal signal peptide occupies residues 1 to 15; sequence MKKPVVIGLAVVVLA. The stretch at 107 to 208 forms a coiled coil; that stretch reads EEIAQAAAAV…LNLQDSTLIA (102 aa).

The protein belongs to the UPF0194 family.

The protein resides in the periplasm. This chain is UPF0194 membrane protein YbhG, found in Escherichia coli O157:H7 (strain EC4115 / EHEC).